Consider the following 296-residue polypeptide: GTPase Era (296 aa).

Positions 7-174 (RTGFVAVVGR…LDEIAARLPE (168 aa)) constitute an Era-type G domain. The interval 15 to 22 (GRPNVGKS) is G1. Residue 15–22 (GRPNVGKS) coordinates GTP. The segment at 41–45 (QTTRH) is G2. The interval 62-65 (DTPG) is G3. Residues 62 to 66 (DTPGF) and 123 to 126 (SKID) each bind GTP. The segment at 123–126 (SKID) is G4. Residues 153 to 155 (VSA) form a G5 region. Residues 205-281 (VGDELPYGCT…HLEVYIKVRK (77 aa)) form the KH type-2 domain.

Belongs to the TRAFAC class TrmE-Era-EngA-EngB-Septin-like GTPase superfamily. Era GTPase family. In terms of assembly, monomer.

It is found in the cytoplasm. The protein resides in the cell inner membrane. Functionally, an essential GTPase that binds both GDP and GTP, with rapid nucleotide exchange. Plays a role in 16S rRNA processing and 30S ribosomal subunit biogenesis and possibly also in cell cycle regulation and energy metabolism. The chain is GTPase Era from Bordetella petrii (strain ATCC BAA-461 / DSM 12804 / CCUG 43448).